We begin with the raw amino-acid sequence, 140 residues long: Large-conductance mechanosensitive channel (140 aa).

3 helical membrane-spanning segments follow: residues 14-34, 37-57, and 66-86; these read VLDLAVGVIIGGAFTSIVKSL, YLINPLIGLFIGGIDFSDWVL, and FGSFINAVINFLIIAFVVFIL.

It belongs to the MscL family. Homopentamer.

It localises to the cell membrane. Functionally, channel that opens in response to stretch forces in the membrane lipid bilayer. May participate in the regulation of osmotic pressure changes within the cell. This is Large-conductance mechanosensitive channel from Pediococcus pentosaceus (strain ATCC 25745 / CCUG 21536 / LMG 10740 / 183-1w).